Here is a 586-residue protein sequence, read N- to C-terminus: Phosphatase and actin regulator 1 (586 aa).

A Nuclear localization signal motif is present at residues 62–83 (RRRSKFATLGRLFKPWKWRKKK). One copy of the RPEL 1 repeat lies at 92 to 117 (AALERKISMRQSREELIKRGVLKEMY). Residues 373–414 (ECEDDKENVPHETSYDDSSCLYSRDEEEDDDDDDDDEDDDSS) form a disordered region. Acidic residues predominate over residues 397–413 (DEEEDDDDDDDDEDDDS). RPEL repeat units follow at residues 428–453 (DSLA…PMQT), 466–491 (TKLT…KPRN), and 504–529 (RRLT…ISFS).

This sequence belongs to the phosphatase and actin regulator family. Interacts (via RPEL repeats) with ACTA1.

The protein resides in the cytoplasm. The protein localises to the synapse. Its subcellular location is the nucleus. Its function is as follows. Binds actin monomers (G actin) and plays a role in the reorganization of the actin cytoskeleton and in formation of actin stress fibers. In Xenopus laevis (African clawed frog), this protein is Phosphatase and actin regulator 1 (phactr1).